The sequence spans 348 residues: Dihydroorotase (348 aa).

Positions 17 and 19 each coordinate Zn(2+). Residues 19–21 (HLR) and asparagine 45 each bind substrate. The Zn(2+) site is built by lysine 103, histidine 140, and histidine 178. Lysine 103 is subject to N6-carboxylysine. Histidine 140 serves as a coordination point for substrate. Leucine 223 provides a ligand contact to substrate. A Zn(2+)-binding site is contributed by aspartate 251. Aspartate 251 is a catalytic residue. Histidine 255 and alanine 267 together coordinate substrate.

It belongs to the metallo-dependent hydrolases superfamily. DHOase family. Class II DHOase subfamily. In terms of assembly, homodimer. Zn(2+) serves as cofactor.

The enzyme catalyses (S)-dihydroorotate + H2O = N-carbamoyl-L-aspartate + H(+). It participates in pyrimidine metabolism; UMP biosynthesis via de novo pathway; (S)-dihydroorotate from bicarbonate: step 3/3. Functionally, catalyzes the reversible cyclization of carbamoyl aspartate to dihydroorotate. In Salmonella agona (strain SL483), this protein is Dihydroorotase.